The chain runs to 1184 residues: DNA-directed RNA polymerase subunit beta (1184 aa).

The interval 1160 to 1184 (DDDFTNQNDAFNIVQPENAATEKTE) is disordered.

Belongs to the RNA polymerase beta chain family. In terms of assembly, the RNAP catalytic core consists of 2 alpha, 1 beta, 1 beta' and 1 omega subunit. When a sigma factor is associated with the core the holoenzyme is formed, which can initiate transcription.

It carries out the reaction RNA(n) + a ribonucleoside 5'-triphosphate = RNA(n+1) + diphosphate. Functionally, DNA-dependent RNA polymerase catalyzes the transcription of DNA into RNA using the four ribonucleoside triphosphates as substrates. This Listeria innocua serovar 6a (strain ATCC BAA-680 / CLIP 11262) protein is DNA-directed RNA polymerase subunit beta.